The sequence spans 655 residues: Phosphatidylinositol-3,5-bisphosphate 3-phosphatase MTMR6 (655 aa).

Residues 1–101 (MEHIRTTKVE…YNSLLQLSKQ (101 aa)) enclose the GRAM domain. The tract at residues 2-141 (EHIRTTKVEQ…AEYERMGVPN (140 aa)) is interaction with RAB1B. Position 108 is a phosphotyrosine (tyrosine 108). The Myotubularin phosphatase domain occupies 124–537 (GWQLIDLAAE…FNFKFWRNMY (414 aa)). Residues asparagine 286, asparagine 311, and isoleucine 312 each contribute to the a 1,2-diacyl-sn-glycero-3-phospho-(1D-myo-inositol-3,5-bisphosphate) site. A 1,2-diacyl-sn-glycero-3-phospho-(1D-myo-inositol-3-phosphate) contacts are provided by asparagine 286, asparagine 311, and isoleucine 312. Cysteine 374 serves as the catalytic Phosphocysteine intermediate. A 1,2-diacyl-sn-glycero-3-phospho-(1D-myo-inositol-3,5-bisphosphate)-binding residues include serine 375, aspartate 376, glycine 377, tryptophan 378, aspartate 379, arginine 380, lysine 416, and arginine 420. A 1,2-diacyl-sn-glycero-3-phospho-(1D-myo-inositol-3-phosphate) contacts are provided by serine 375, aspartate 376, glycine 377, tryptophan 378, aspartate 379, and arginine 380. Arginine 420 provides a ligand contact to a 1,2-diacyl-sn-glycero-3-phospho-(1D-myo-inositol-3-phosphate). Residues 547–581 (RQSVLNIIMNMNEQNKQLEEDVKDLEAKIKQCKSG) adopt a coiled-coil conformation. Residues serine 595, serine 623, and serine 645 each carry the phosphoserine modification.

It belongs to the protein-tyrosine phosphatase family. Non-receptor class myotubularin subfamily. As to quaternary structure, homodimer. Heterodimer (via C-terminus) with MTMR9 (via C-terminus). Interacts with ALKBH4. Interacts with KCNN4. Interacts (via GRAM domain) with RAB1B (in GDP-bound form); the interaction regulates MTMR6 recruitment to the endoplasmic reticulum-Golgi intermediate compartment.

The protein localises to the cytoplasm. It is found in the endoplasmic reticulum. The protein resides in the cell projection. Its subcellular location is the ruffle membrane. It localises to the endoplasmic reticulum-Golgi intermediate compartment. The protein localises to the perinuclear region. The catalysed reaction is a 1,2-diacyl-sn-glycero-3-phospho-(1D-myo-inositol-3,5-bisphosphate) + H2O = a 1,2-diacyl-sn-glycero-3-phospho-(1D-myo-inositol-5-phosphate) + phosphate. It carries out the reaction a 1,2-diacyl-sn-glycero-3-phospho-(1D-myo-inositol-3-phosphate) + H2O = a 1,2-diacyl-sn-glycero-3-phospho-(1D-myo-inositol) + phosphate. The enzyme catalyses 1,2-dioctanoyl-sn-glycero-3-phospho-(1D-myo-inositol-3,5-bisphosphate) + H2O = 1,2-dioctanoyl-sn-glycero-3-phospho-(1D-myo-inositol-5-phosphate) + phosphate. It catalyses the reaction 1,2-dioctanoyl-sn-glycero-3-phospho-(1-D-myo-inositol-3-phosphate) + H2O = 1,2-dioctanoyl-sn-glycero-3-phospho-(1D-myo-inositol) + phosphate. Its activity is regulated as follows. Allosterically activated by phosphatidylserine and/or phosphatidylinositol 4-phosphate (PtdIns(4)P), and phosphatidylinositol 5-phosphate (PtdIns(5)P). Interaction with MTMR9 increases catalytic activity towards phosphatidylinositol 3,5-bisphosphate. Its function is as follows. Lipid phosphatase that specifically dephosphorylates the D-3 position of phosphatidylinositol 3-phosphate and phosphatidylinositol 3,5-bisphosphate, generating phosphatidylinositol and phosphatidylinositol 5-phosphate. Binds with high affinity to phosphatidylinositol 3,5-bisphosphate (PtdIns(3,5)P2) but also to phosphatidylinositol 3-phosphate (PtdIns(3)P), phosphatidylinositol 4-phosphate (PtdIns(4)P), and phosphatidylinositol 5-phosphate (PtdIns(5)P), phosphatidic acid and phosphatidylserine. Negatively regulates ER-Golgi protein transport. Probably in association with MTMR9, plays a role in the late stages of macropinocytosis by dephosphorylating phosphatidylinositol 3-phosphate in membrane ruffles. Acts as a negative regulator of KCNN4/KCa3.1 channel activity in CD4(+) T-cells possibly by decreasing intracellular levels of phosphatidylinositol 3-phosphate. Negatively regulates proliferation of reactivated CD4(+) T-cells. In complex with MTMR9, negatively regulates DNA damage-induced apoptosis. The formation of the MTMR6-MTMR9 complex stabilizes both MTMR6 and MTMR9 protein levels. In Rattus norvegicus (Rat), this protein is Phosphatidylinositol-3,5-bisphosphate 3-phosphatase MTMR6.